The sequence spans 191 residues: Thymidine kinase (191 aa).

Residues 15-22 and 88-91 each bind ATP; these read GSMFSGKS and DEVQ. Catalysis depends on Glu-89, which acts as the Proton acceptor. Residues Cys-145, Cys-148, Cys-183, and His-186 each contribute to the Zn(2+) site.

The protein belongs to the thymidine kinase family. Homotetramer.

The protein resides in the cytoplasm. The catalysed reaction is thymidine + ATP = dTMP + ADP + H(+). This is Thymidine kinase from Macrococcus caseolyticus (strain JCSC5402) (Macrococcoides caseolyticum).